Here is a 70-residue protein sequence, read N- to C-terminus: UPF0426 protein ssl0294 (70 aa).

Belongs to the UPF0426 family.

The chain is UPF0426 protein ssl0294 from Synechocystis sp. (strain ATCC 27184 / PCC 6803 / Kazusa).